Here is a 1058-residue protein sequence, read N- to C-terminus: Carbamoyl phosphate synthase large chain (1058 aa).

The carboxyphosphate synthetic domain stretch occupies residues 1 to 401 (MPKRKDIQKI…SLLKACRSLE (401 aa)). 12 residues coordinate ATP: R129, R169, G175, G176, R208, I210, E215, G241, I242, H243, Q284, and E298. Residues 133–327 (KQLMQELDQP…IAKLAAKIAV (195 aa)) form the ATP-grasp 1 domain. Q284, E298, and N300 together coordinate Mg(2+). Residues Q284, E298, and N300 each contribute to the Mn(2+) site. The tract at residues 402–546 (IGVCHNEMTS…YSTYELENES (145 aa)) is oligomerization domain. Residues 547 to 929 (VQSNKESILV…ALYKAFEANN (383 aa)) are carbamoyl phosphate synthetic domain. An ATP-grasp 2 domain is found at 671-861 (EKALKELGIP…MAQIATKLIL (191 aa)). R707, S746, I748, E752, G777, V778, H779, S780, Q820, and E832 together coordinate ATP. 3 residues coordinate Mg(2+): Q820, E832, and N834. Residues Q820, E832, and N834 each contribute to the Mn(2+) site. Residues 930–1058 (SHLSEFGQIV…ESRCFNIEAI (129 aa)) enclose the MGS-like domain. The allosteric domain stretch occupies residues 930–1058 (SHLSEFGQIV…ESRCFNIEAI (129 aa)).

This sequence belongs to the CarB family. Composed of two chains; the small (or glutamine) chain promotes the hydrolysis of glutamine to ammonia, which is used by the large (or ammonia) chain to synthesize carbamoyl phosphate. Tetramer of heterodimers (alpha,beta)4. Requires Mg(2+) as cofactor. Mn(2+) serves as cofactor.

It carries out the reaction hydrogencarbonate + L-glutamine + 2 ATP + H2O = carbamoyl phosphate + L-glutamate + 2 ADP + phosphate + 2 H(+). It catalyses the reaction hydrogencarbonate + NH4(+) + 2 ATP = carbamoyl phosphate + 2 ADP + phosphate + 2 H(+). It functions in the pathway amino-acid biosynthesis; L-arginine biosynthesis; carbamoyl phosphate from bicarbonate: step 1/1. The protein operates within pyrimidine metabolism; UMP biosynthesis via de novo pathway; (S)-dihydroorotate from bicarbonate: step 1/3. Its function is as follows. Large subunit of the glutamine-dependent carbamoyl phosphate synthetase (CPSase). CPSase catalyzes the formation of carbamoyl phosphate from the ammonia moiety of glutamine, carbonate, and phosphate donated by ATP, constituting the first step of 2 biosynthetic pathways, one leading to arginine and/or urea and the other to pyrimidine nucleotides. The large subunit (synthetase) binds the substrates ammonia (free or transferred from glutamine from the small subunit), hydrogencarbonate and ATP and carries out an ATP-coupled ligase reaction, activating hydrogencarbonate by forming carboxy phosphate which reacts with ammonia to form carbamoyl phosphate. This is Carbamoyl phosphate synthase large chain from Streptococcus pyogenes serotype M1.